The chain runs to 457 residues: Transcription factor CP2-like protein 1 (457 aa).

A mediate transcriptional repression region spans residues Met-1–Cys-52. The Grh/CP2 DB domain occupies Arg-43–Asn-280. Disordered stretches follow at residues Lys-219 to Tyr-245 and Pro-271 to Gly-301. Basic and acidic residues predominate over residues Lys-221–Tyr-245. Positions Pro-261–Arg-365 are SAM2-like domain. The span at Pro-271–Ser-281 shows a compositional bias: polar residues.

The protein belongs to the grh/CP2 family. CP2 subfamily. As to quaternary structure, forms homohexamers via its SAM-like domain. Interacts with MTA1; which is indispensable for TFCP2L1-mediated self-renewal-promoting effect and endoderm-inhibiting action.

Its subcellular location is the nucleus. Functionally, transcription factor that facilitates establishment and maintenance of pluripotency in embryonic stem cells (ESCs). With KLF2, acts as the major effector of self-renewal that mediates induction of pluripotency downstream of LIF/STAT3 and Wnt/beta-catenin signaling. Required for normal duct development in the salivary gland and kidney. Coordinates the development of the kidney collecting ducts intercalated (IC) and principal (PC) cells, which regulate acid-base and salt-water homeostasis, respectively. Regulates the expression of IC genes including subunits B1 and D2 of the V-ATPase complex, OXGR1, CA12, SLC4A1, AQP6 and IC-specific transcription factor FOXI1. Also regulates the expression of JAG1 and subsequent notch signaling in the collecting duct. JAG1 initiates notch signaling in PCs but inhibits notch signaling in ICs. Acts as a transcriptional suppressor that may suppress UBP1-mediated transcriptional activation. Modulates the placental expression of CYP11A1. This chain is Transcription factor CP2-like protein 1 (TFCP2L1), found in Pongo abelii (Sumatran orangutan).